The sequence spans 462 residues: 3-deoxy-D-manno-octulosonic acid transferase (462 aa).

A helical; Signal-anchor membrane pass occupies residues 2–22; it reads MLLYYILSFILLPVYFIIIFI. Residues 47-90 enclose the RPE1 insert domain; that stretch reads SLLDLQMSVNQEGFKVDTEHKATSYVYIHRNASLMYKLSLERSY. Residue E104 is the Proton acceptor of the active site. CMP is bound by residues 308–309, 349–351, and 374–377; these read PR, FGE, and NILE.

It belongs to the glycosyltransferase group 1 family.

It localises to the cell inner membrane. The enzyme catalyses lipid IVA (E. coli) + CMP-3-deoxy-beta-D-manno-octulosonate = alpha-Kdo-(2-&gt;6)-lipid IVA (E. coli) + CMP + H(+). Its pathway is bacterial outer membrane biogenesis; LPS core biosynthesis. In terms of biological role, involved in lipopolysaccharide (LPS) biosynthesis. Catalyzes the transfer of 3-deoxy-D-manno-octulosonate (Kdo) residue(s) from CMP-Kdo to lipid IV(A), the tetraacyldisaccharide-1,4'-bisphosphate precursor of lipid A. In Rickettsia typhi (strain ATCC VR-144 / Wilmington), this protein is 3-deoxy-D-manno-octulosonic acid transferase (waaA).